The primary structure comprises 902 residues: Glycogen phosphorylase (902 aa).

Residues 1–21 are disordered; that stretch reads MPPASTSTTNDMITEEPTSPH. Residue Thr31 is modified to Phosphothreonine. Ser333 bears the Phosphoserine mark. The residue at position 751 (Lys751) is an N6-(pyridoxal phosphate)lysine.

Belongs to the glycogen phosphorylase family. Homodimer. Pyridoxal 5'-phosphate is required as a cofactor.

The protein localises to the cytoplasm. It localises to the cytosol. The enzyme catalyses [(1-&gt;4)-alpha-D-glucosyl](n) + phosphate = [(1-&gt;4)-alpha-D-glucosyl](n-1) + alpha-D-glucose 1-phosphate. Activated by phosphorylation of Thr-31. Phosphorylase is an important allosteric enzyme in carbohydrate metabolism. Enzymes from different sources differ in their regulatory mechanisms and in their natural substrates. However, all known phosphorylases share catalytic and structural properties. This Saccharomyces cerevisiae (strain ATCC 204508 / S288c) (Baker's yeast) protein is Glycogen phosphorylase (GPH1).